A 340-amino-acid chain; its full sequence is Anthranilate phosphoribosyltransferase (340 aa).

Residues glycine 82, 85–86 (GD), threonine 90, 92–95 (NISS), 110–118 (KHGGRSVSS), and alanine 122 each bind 5-phospho-alpha-D-ribose 1-diphosphate. Position 82 (glycine 82) interacts with anthranilate. Residue serine 94 participates in Mg(2+) binding. Arginine 168 contributes to the anthranilate binding site. Residues aspartate 227 and glutamate 228 each contribute to the Mg(2+) site.

This sequence belongs to the anthranilate phosphoribosyltransferase family. In terms of assembly, homodimer. Requires Mg(2+) as cofactor.

It carries out the reaction N-(5-phospho-beta-D-ribosyl)anthranilate + diphosphate = 5-phospho-alpha-D-ribose 1-diphosphate + anthranilate. The protein operates within amino-acid biosynthesis; L-tryptophan biosynthesis; L-tryptophan from chorismate: step 2/5. Functionally, catalyzes the transfer of the phosphoribosyl group of 5-phosphorylribose-1-pyrophosphate (PRPP) to anthranilate to yield N-(5'-phosphoribosyl)-anthranilate (PRA). The polypeptide is Anthranilate phosphoribosyltransferase (Dechloromonas aromatica (strain RCB)).